A 212-amino-acid polypeptide reads, in one-letter code: Large ribosomal subunit protein uL3 (212 aa).

Residue Gln153 is modified to N5-methylglutamine.

The protein belongs to the universal ribosomal protein uL3 family. As to quaternary structure, part of the 50S ribosomal subunit. Forms a cluster with proteins L14 and L19. Methylated by PrmB.

Its function is as follows. One of the primary rRNA binding proteins, it binds directly near the 3'-end of the 23S rRNA, where it nucleates assembly of the 50S subunit. This Shewanella sediminis (strain HAW-EB3) protein is Large ribosomal subunit protein uL3.